Consider the following 209-residue polypeptide: Probable nicotinate-nucleotide adenylyltransferase (209 aa).

This sequence belongs to the NadD family.

The enzyme catalyses nicotinate beta-D-ribonucleotide + ATP + H(+) = deamido-NAD(+) + diphosphate. The protein operates within cofactor biosynthesis; NAD(+) biosynthesis; deamido-NAD(+) from nicotinate D-ribonucleotide: step 1/1. In terms of biological role, catalyzes the reversible adenylation of nicotinate mononucleotide (NaMN) to nicotinic acid adenine dinucleotide (NaAD). The chain is Probable nicotinate-nucleotide adenylyltransferase from Streptococcus pneumoniae serotype 4 (strain ATCC BAA-334 / TIGR4).